The chain runs to 362 residues: 3-isopropylmalate dehydrogenase (362 aa).

Residue 78 to 91 participates in NAD(+) binding; it reads GYKWDSLPPHQRPE. Substrate is bound by residues Arg-98, Arg-108, Arg-136, and Asp-226. Residues Asp-226, Asp-250, and Asp-254 each coordinate Mg(2+). 284-296 is an NAD(+) binding site; that stretch reads GSAPDIAGQDKAN.

The protein belongs to the isocitrate and isopropylmalate dehydrogenases family. LeuB type 1 subfamily. Homodimer. Mg(2+) serves as cofactor. It depends on Mn(2+) as a cofactor.

It localises to the cytoplasm. The enzyme catalyses (2R,3S)-3-isopropylmalate + NAD(+) = 4-methyl-2-oxopentanoate + CO2 + NADH. The protein operates within amino-acid biosynthesis; L-leucine biosynthesis; L-leucine from 3-methyl-2-oxobutanoate: step 3/4. Functionally, catalyzes the oxidation of 3-carboxy-2-hydroxy-4-methylpentanoate (3-isopropylmalate) to 3-carboxy-4-methyl-2-oxopentanoate. The product decarboxylates to 4-methyl-2 oxopentanoate. This chain is 3-isopropylmalate dehydrogenase, found in Nostoc sp. (strain PCC 7120 / SAG 25.82 / UTEX 2576).